The sequence spans 263 residues: Zinc transporter ZupT (263 aa).

Transmembrane regions (helical) follow at residues 1–21 (MLFA…GGLI), 37–57 (LGFS…PGAF), 68–88 (GGSW…AIID), 116–136 (MMKM…PEGF), and 138–158 (TFLA…AIAI). Fe(2+) contacts are provided by Asn-131 and Glu-134. Residue Glu-134 participates in Zn(2+) binding. His-159 is a binding site for Zn(2+). Residues Asn-160, Glu-163, and Glu-192 each coordinate Fe(2+). Glu-163 is a Zn(2+) binding site. Helical transmembrane passes span 184–204 (WATL…LLLM), 206–226 (FIGP…MVFI), and 243–263 (TAIY…LLFI).

The protein belongs to the ZIP transporter (TC 2.A.5) family. ZupT subfamily.

Its subcellular location is the cell membrane. It carries out the reaction Zn(2+)(in) = Zn(2+)(out). Mediates zinc uptake. May also transport other divalent cations. This is Zinc transporter ZupT from Corynebacterium glutamicum (strain ATCC 13032 / DSM 20300 / JCM 1318 / BCRC 11384 / CCUG 27702 / LMG 3730 / NBRC 12168 / NCIMB 10025 / NRRL B-2784 / 534).